A 389-amino-acid polypeptide reads, in one-letter code: tRNA-specific 2-thiouridylase MnmA (389 aa).

Residues 35–42 and Met-61 contribute to the ATP site; that span reads GMSGGVDS. An interaction with target base in tRNA region spans residues 121-123; the sequence is NPD. Cys-126 serves as the catalytic Nucleophile. Cys-126 and Cys-223 form a disulfide bridge. Gly-151 provides a ligand contact to ATP. An interaction with tRNA region spans residues 173-175; that stretch reads KDQ. Residue Cys-223 is the Cysteine persulfide intermediate of the active site. Residues 335 to 336 form an interaction with tRNA region; that stretch reads RY.

Belongs to the MnmA/TRMU family.

The protein resides in the cytoplasm. It carries out the reaction S-sulfanyl-L-cysteinyl-[protein] + uridine(34) in tRNA + AH2 + ATP = 2-thiouridine(34) in tRNA + L-cysteinyl-[protein] + A + AMP + diphosphate + H(+). Its function is as follows. Catalyzes the 2-thiolation of uridine at the wobble position (U34) of tRNA, leading to the formation of s(2)U34. The sequence is that of tRNA-specific 2-thiouridylase MnmA from Mannheimia succiniciproducens (strain KCTC 0769BP / MBEL55E).